A 133-amino-acid polypeptide reads, in one-letter code: Small ribosomal subunit protein uS8c (133 aa).

This sequence belongs to the universal ribosomal protein uS8 family. In terms of assembly, part of the 30S ribosomal subunit.

Its subcellular location is the plastid. It localises to the chloroplast. Functionally, one of the primary rRNA binding proteins, it binds directly to 16S rRNA central domain where it helps coordinate assembly of the platform of the 30S subunit. The protein is Small ribosomal subunit protein uS8c (rps8) of Cyanidium caldarium (Red alga).